We begin with the raw amino-acid sequence, 143 residues long: Transcriptional regulator MraZ (143 aa).

SpoVT-AbrB domains lie at 5 to 47 (SHAP…PMAE) and 76 to 119 (AADD…DAQR).

It belongs to the MraZ family. In terms of assembly, forms oligomers.

It is found in the cytoplasm. The protein localises to the nucleoid. This is Transcriptional regulator MraZ from Frankia casuarinae (strain DSM 45818 / CECT 9043 / HFP020203 / CcI3).